Here is a 338-residue protein sequence, read N- to C-terminus: Phosphate acyltransferase (338 aa).

Belongs to the PlsX family. In terms of assembly, homodimer. Probably interacts with PlsY.

Its subcellular location is the cytoplasm. It catalyses the reaction a fatty acyl-[ACP] + phosphate = an acyl phosphate + holo-[ACP]. The protein operates within lipid metabolism; phospholipid metabolism. Catalyzes the reversible formation of acyl-phosphate (acyl-PO(4)) from acyl-[acyl-carrier-protein] (acyl-ACP). This enzyme utilizes acyl-ACP as fatty acyl donor, but not acyl-CoA. The protein is Phosphate acyltransferase of Gloeobacter violaceus (strain ATCC 29082 / PCC 7421).